Reading from the N-terminus, the 1258-residue chain is Regulator of G-protein signaling 22 (1258 aa).

A disordered region spans residues 581–604 (QQLGRSEPLNAVSSKDGGLEKGSK). RGS domains lie at 845–973 (TFTD…ASRQ) and 1014–1138 (AFRK…TDEK). The interval 1145–1172 (RRQEHKQKRKASDTEEDKAGKSGVKQYA) is disordered. A compositionally biased stretch (basic and acidic residues) spans 1154-1164 (KASDTEEDKAG).

As to quaternary structure, interacts with GNA11, GNA12 and GNA13. Expressed testis, including in Leydig cells and spermatogenic cells from the spermatogonia to spermatid stages (at protein level).

The protein resides in the cytoplasm. It localises to the nucleus. Functionally, inhibits signal transduction by increasing the GTPase activity of G protein alpha subunits thereby driving them into their inactive GDP-bound form. In Mus musculus (Mouse), this protein is Regulator of G-protein signaling 22 (Rgs22).